Here is a 161-residue protein sequence, read N- to C-terminus: MSYRSFSFLPNIDQNSVFSNRFNQIDKIFSTLTGEKPLSDTPAYNLFQIDEHKYELILSIPGYEEKELDISVHNSQLTVQGKKQNQENDDKKIKKYLHKGIIFNDFSLNFNFDHKIQVKKAELFSGLLKINFECRVPDEEKPKKIFINIPNKVKEIEKNKI.

One can recognise a sHSP domain in the interval 35-150; that stretch reads EKPLSDTPAY…KPKKIFINIP (116 aa).

The protein belongs to the small heat shock protein (HSP20) family.

The sequence is that of Small heat shock protein ibp (ibp) from Buchnera aphidicola subsp. Schizaphis graminum (strain Sg).